Here is a 75-residue protein sequence, read N- to C-terminus: Translation initiation factor IF-1, chloroplastic (75 aa).

The S1-like domain maps to 1–72; that stretch reads MKKQNLIHAE…TKGRIIYRLS (72 aa).

It belongs to the IF-1 family. As to quaternary structure, component of the 30S ribosomal translation pre-initiation complex which assembles on the 30S ribosome in the order IF-2 and IF-3, IF-1 and N-formylmethionyl-tRNA(fMet); mRNA recruitment can occur at any time during PIC assembly.

It localises to the plastid. Its subcellular location is the chloroplast. In terms of biological role, one of the essential components for the initiation of protein synthesis. Stabilizes the binding of IF-2 and IF-3 on the 30S subunit to which N-formylmethionyl-tRNA(fMet) subsequently binds. Helps modulate mRNA selection, yielding the 30S pre-initiation complex (PIC). Upon addition of the 50S ribosomal subunit IF-1, IF-2 and IF-3 are released leaving the mature 70S translation initiation complex. This chain is Translation initiation factor IF-1, chloroplastic, found in Pinus koraiensis (Korean pine).